A 258-amino-acid chain; its full sequence is D-aminoacyl-tRNA deacylase (258 aa).

It belongs to the DtdA deacylase family. Monomer. Zn(2+) serves as cofactor.

The enzyme catalyses a D-aminoacyl-tRNA + H2O = a tRNA + a D-alpha-amino acid + H(+). It carries out the reaction glycyl-tRNA(Ala) + H2O = tRNA(Ala) + glycine + H(+). Functionally, D-aminoacyl-tRNA deacylase with broad substrate specificity. By recycling D-aminoacyl-tRNA to D-amino acids and free tRNA molecules, this enzyme counteracts the toxicity associated with the formation of D-aminoacyl-tRNA entities in vivo. This is D-aminoacyl-tRNA deacylase from Cenarchaeum symbiosum (strain A).